The following is a 260-amino-acid chain: MTAETERIGVKGGMEYSFGFTKIDEAQKQSMVDGVFHSVAENYDKMNDILSLGLHRTWKNSMVAWLSPPALSNWKVLDVAGGTGDIAFRILNASRKKAHATVLDINSSMLSVGKKRAQKNGLAPLTDFVEANAEHLPFEDQSFDAYTIAFGIRNVPHINQALREAFRVLKPGGRFLCLEFSNVEMPLLNKIYDLWSFHVIPKLGQFIADNGDAYRYLVESIRKFPKQDDFSHMLNHAGFSRVSYRNLTGAIAALHSAWKI.

S-adenosyl-L-methionine is bound by residues T83, D104, and 132-133 (NA).

This sequence belongs to the class I-like SAM-binding methyltransferase superfamily. MenG/UbiE family.

It carries out the reaction a 2-demethylmenaquinol + S-adenosyl-L-methionine = a menaquinol + S-adenosyl-L-homocysteine + H(+). The enzyme catalyses a 2-methoxy-6-(all-trans-polyprenyl)benzene-1,4-diol + S-adenosyl-L-methionine = a 5-methoxy-2-methyl-3-(all-trans-polyprenyl)benzene-1,4-diol + S-adenosyl-L-homocysteine + H(+). The protein operates within quinol/quinone metabolism; menaquinone biosynthesis; menaquinol from 1,4-dihydroxy-2-naphthoate: step 2/2. It participates in cofactor biosynthesis; ubiquinone biosynthesis. Functionally, methyltransferase required for the conversion of demethylmenaquinol (DMKH2) to menaquinol (MKH2) and the conversion of 2-polyprenyl-6-methoxy-1,4-benzoquinol (DDMQH2) to 2-polyprenyl-3-methyl-6-methoxy-1,4-benzoquinol (DMQH2). In Bartonella quintana (strain Toulouse) (Rochalimaea quintana), this protein is Ubiquinone/menaquinone biosynthesis C-methyltransferase UbiE.